Consider the following 236-residue polypeptide: Probable metal transport system ATP-binding protein TC_0697 (236 aa).

The ABC transporter domain maps to 5–236 (LILENVSFRY…FCCNTFGKCS (232 aa)). 39-46 (GPNGGGKT) contributes to the ATP binding site.

The protein belongs to the ABC transporter superfamily.

The protein resides in the cell inner membrane. Functionally, part of an ATP-driven transport system TC_0696/TC_0697/TC_0698 for a metal. Probably responsible for energy coupling to the transport system. This Chlamydia muridarum (strain MoPn / Nigg) protein is Probable metal transport system ATP-binding protein TC_0697.